The sequence spans 179 residues: NADH-quinone oxidoreductase subunit I (179 aa).

4Fe-4S ferredoxin-type domains are found at residues 49–79 (LTRD…LQKG) and 89–118 (EFFR…LTPD). Residues Cys59, Cys62, Cys65, Cys69, Cys98, Cys101, Cys104, and Cys108 each contribute to the [4Fe-4S] cluster site.

This sequence belongs to the complex I 23 kDa subunit family. NDH-1 is composed of 14 different subunits. Subunits NuoA, H, J, K, L, M, N constitute the membrane sector of the complex. [4Fe-4S] cluster is required as a cofactor.

It is found in the cell inner membrane. The catalysed reaction is a quinone + NADH + 5 H(+)(in) = a quinol + NAD(+) + 4 H(+)(out). Its function is as follows. NDH-1 shuttles electrons from NADH, via FMN and iron-sulfur (Fe-S) centers, to quinones in the respiratory chain. The immediate electron acceptor for the enzyme in this species is believed to be ubiquinone. Couples the redox reaction to proton translocation (for every two electrons transferred, four hydrogen ions are translocated across the cytoplasmic membrane), and thus conserves the redox energy in a proton gradient. In Chromohalobacter salexigens (strain ATCC BAA-138 / DSM 3043 / CIP 106854 / NCIMB 13768 / 1H11), this protein is NADH-quinone oxidoreductase subunit I.